Here is a 241-residue protein sequence, read N- to C-terminus: 1-(5-phosphoribosyl)-5-[(5-phosphoribosylamino)methylideneamino] imidazole-4-carboxamide isomerase (241 aa).

D10 (proton acceptor) is an active-site residue. Catalysis depends on D131, which acts as the Proton donor.

It belongs to the HisA/HisF family.

The protein localises to the cytoplasm. It carries out the reaction 1-(5-phospho-beta-D-ribosyl)-5-[(5-phospho-beta-D-ribosylamino)methylideneamino]imidazole-4-carboxamide = 5-[(5-phospho-1-deoxy-D-ribulos-1-ylimino)methylamino]-1-(5-phospho-beta-D-ribosyl)imidazole-4-carboxamide. It participates in amino-acid biosynthesis; L-histidine biosynthesis; L-histidine from 5-phospho-alpha-D-ribose 1-diphosphate: step 4/9. In Bifidobacterium longum (strain DJO10A), this protein is 1-(5-phosphoribosyl)-5-[(5-phosphoribosylamino)methylideneamino] imidazole-4-carboxamide isomerase.